The sequence spans 275 residues: Undecaprenyl-diphosphatase 2 (275 aa).

The next 7 membrane-spanning stretches (helical) occupy residues 48–68 (NAYVFKIVIQLGSILAVALLF), 90–110 (GLTLGKVAVGLLPAAVLGLLF), 117–137 (IFHVRTVAFALIAGAFLMIAA), 154–174 (ISYKQALAIGLFQCLALWPGF), 195–215 (ANFTFIMAIPIMVGASALSLI), 223–243 (ISLLPFYATGFISAFLVSLVV), and 254–274 (IKLVPFALYRIALGLLLLFLF).

Belongs to the UppP family.

It is found in the cell membrane. The catalysed reaction is di-trans,octa-cis-undecaprenyl diphosphate + H2O = di-trans,octa-cis-undecaprenyl phosphate + phosphate + H(+). Its function is as follows. Catalyzes the dephosphorylation of undecaprenyl diphosphate (UPP). Confers resistance to bacitracin. The sequence is that of Undecaprenyl-diphosphatase 2 from Shouchella clausii (strain KSM-K16) (Alkalihalobacillus clausii).